The sequence spans 301 residues: Small ribosomal subunit protein uS2 (301 aa).

Belongs to the universal ribosomal protein uS2 family. Component of the small ribosomal subunit. Mature ribosomes consist of a small (40S) and a large (60S) subunit. The 40S subunit contains about 33 different proteins and 1 molecule of RNA (18S). The 60S subunit contains about 49 different proteins and 3 molecules of RNA (25S, 5.8S and 5S). Interacts with RPS21.

Its subcellular location is the cytoplasm. Required for the assembly and/or stability of the 40S ribosomal subunit. Required for the processing of the 20S rRNA-precursor to mature 18S rRNA in a late step of the maturation of 40S ribosomal subunits. The polypeptide is Small ribosomal subunit protein uS2 (Ajellomyces dermatitidis (strain ER-3 / ATCC MYA-2586) (Blastomyces dermatitidis)).